A 277-amino-acid chain; its full sequence is Large ribosomal subunit protein uL2 (277 aa).

The interval 223–277 (VVMNPIDHPHGGGEGRTSGGRHPVTPWGKPTKGKKTRSNKSTNKFILISRHKRKK) is disordered.

This sequence belongs to the universal ribosomal protein uL2 family. As to quaternary structure, part of the 50S ribosomal subunit. Forms a bridge to the 30S subunit in the 70S ribosome.

In terms of biological role, one of the primary rRNA binding proteins. Required for association of the 30S and 50S subunits to form the 70S ribosome, for tRNA binding and peptide bond formation. It has been suggested to have peptidyltransferase activity; this is somewhat controversial. Makes several contacts with the 16S rRNA in the 70S ribosome. This Nitrobacter hamburgensis (strain DSM 10229 / NCIMB 13809 / X14) protein is Large ribosomal subunit protein uL2.